A 346-amino-acid polypeptide reads, in one-letter code: Holliday junction branch migration complex subunit RuvB (346 aa).

A large ATPase domain (RuvB-L) region spans residues 1 to 183 (MTEQRIIASS…FGIVQRLEFY (183 aa)). ATP-binding positions include isoleucine 22, arginine 23, glycine 64, lysine 67, threonine 68, threonine 69, 130–132 (EDF), arginine 173, tyrosine 183, and arginine 220. Threonine 68 serves as a coordination point for Mg(2+). Positions 184-254 (SPQELTRIVS…VAQAAMQMLK (71 aa)) are small ATPAse domain (RuvB-S). The segment at 257–346 (PEGFDELDRR…PGIGEPGDLF (90 aa)) is head domain (RuvB-H). Residues arginine 293, arginine 312, and arginine 317 each coordinate DNA.

It belongs to the RuvB family. As to quaternary structure, homohexamer. Forms an RuvA(8)-RuvB(12)-Holliday junction (HJ) complex. HJ DNA is sandwiched between 2 RuvA tetramers; dsDNA enters through RuvA and exits via RuvB. An RuvB hexamer assembles on each DNA strand where it exits the tetramer. Each RuvB hexamer is contacted by two RuvA subunits (via domain III) on 2 adjacent RuvB subunits; this complex drives branch migration. In the full resolvosome a probable DNA-RuvA(4)-RuvB(12)-RuvC(2) complex forms which resolves the HJ.

The protein resides in the cytoplasm. The enzyme catalyses ATP + H2O = ADP + phosphate + H(+). In terms of biological role, the RuvA-RuvB-RuvC complex processes Holliday junction (HJ) DNA during genetic recombination and DNA repair, while the RuvA-RuvB complex plays an important role in the rescue of blocked DNA replication forks via replication fork reversal (RFR). RuvA specifically binds to HJ cruciform DNA, conferring on it an open structure. The RuvB hexamer acts as an ATP-dependent pump, pulling dsDNA into and through the RuvAB complex. RuvB forms 2 homohexamers on either side of HJ DNA bound by 1 or 2 RuvA tetramers; 4 subunits per hexamer contact DNA at a time. Coordinated motions by a converter formed by DNA-disengaged RuvB subunits stimulates ATP hydrolysis and nucleotide exchange. Immobilization of the converter enables RuvB to convert the ATP-contained energy into a lever motion, pulling 2 nucleotides of DNA out of the RuvA tetramer per ATP hydrolyzed, thus driving DNA branch migration. The RuvB motors rotate together with the DNA substrate, which together with the progressing nucleotide cycle form the mechanistic basis for DNA recombination by continuous HJ branch migration. Branch migration allows RuvC to scan DNA until it finds its consensus sequence, where it cleaves and resolves cruciform DNA. The polypeptide is Holliday junction branch migration complex subunit RuvB (Xanthomonas euvesicatoria pv. vesicatoria (strain 85-10) (Xanthomonas campestris pv. vesicatoria)).